The primary structure comprises 137 residues: Small ribosomal subunit protein bS16m (137 aa).

The N-terminal 34 residues, 1 to 34 (MVHLTTLLCKAYRGGHLTIRLALGGCTNRPFYRI), are a transit peptide targeting the mitochondrion. Thr130 carries the post-translational modification Phosphothreonine.

This sequence belongs to the bacterial ribosomal protein bS16 family. Component of the mitochondrial ribosome small subunit (28S) which comprises a 12S rRNA and about 30 distinct proteins.

It is found in the mitochondrion. This is Small ribosomal subunit protein bS16m (MRPS16) from Pongo abelii (Sumatran orangutan).